A 415-amino-acid polypeptide reads, in one-letter code: Gamma-glutamyl phosphate reductase (415 aa).

Belongs to the gamma-glutamyl phosphate reductase family.

The protein resides in the cytoplasm. It carries out the reaction L-glutamate 5-semialdehyde + phosphate + NADP(+) = L-glutamyl 5-phosphate + NADPH + H(+). It participates in amino-acid biosynthesis; L-proline biosynthesis; L-glutamate 5-semialdehyde from L-glutamate: step 2/2. Catalyzes the NADPH-dependent reduction of L-glutamate 5-phosphate into L-glutamate 5-semialdehyde and phosphate. The product spontaneously undergoes cyclization to form 1-pyrroline-5-carboxylate. The chain is Gamma-glutamyl phosphate reductase from Bacillus thuringiensis subsp. konkukian (strain 97-27).